The primary structure comprises 147 residues: Large ribosomal subunit protein uL16 (147 aa).

This sequence belongs to the universal ribosomal protein uL16 family. In terms of assembly, part of the 50S ribosomal subunit.

Functionally, binds 23S rRNA and is also seen to make contacts with the A and possibly P site tRNAs. The protein is Large ribosomal subunit protein uL16 of Clostridium botulinum (strain ATCC 19397 / Type A).